We begin with the raw amino-acid sequence, 269 residues long: UPF0328 protein ECU03_0020 (269 aa).

It belongs to the UPF0328 family.

This chain is UPF0328 protein ECU03_0020, found in Encephalitozoon cuniculi (strain GB-M1) (Microsporidian parasite).